The sequence spans 176 residues: NAD(P)H-quinone oxidoreductase subunit 6, chloroplastic (176 aa).

The next 5 helical transmembrane spans lie at 10–30, 32–52, 61–81, 92–112, and 152–172; these read FLLV…VLLP, PIYS…FYIL, AQLL…VMFM, LWTV…ISLI, and FFLP…GAIA.

Belongs to the complex I subunit 6 family. NDH is composed of at least 16 different subunits, 5 of which are encoded in the nucleus.

The protein localises to the plastid. The protein resides in the chloroplast thylakoid membrane. The catalysed reaction is a plastoquinone + NADH + (n+1) H(+)(in) = a plastoquinol + NAD(+) + n H(+)(out). It carries out the reaction a plastoquinone + NADPH + (n+1) H(+)(in) = a plastoquinol + NADP(+) + n H(+)(out). NDH shuttles electrons from NAD(P)H:plastoquinone, via FMN and iron-sulfur (Fe-S) centers, to quinones in the photosynthetic chain and possibly in a chloroplast respiratory chain. The immediate electron acceptor for the enzyme in this species is believed to be plastoquinone. Couples the redox reaction to proton translocation, and thus conserves the redox energy in a proton gradient. This chain is NAD(P)H-quinone oxidoreductase subunit 6, chloroplastic (ndhG), found in Solanum tuberosum (Potato).